A 338-amino-acid polypeptide reads, in one-letter code: 6-phosphogluconolactonase (338 aa).

The protein belongs to the cycloisomerase 2 family.

It carries out the reaction 6-phospho-D-glucono-1,5-lactone + H2O = 6-phospho-D-gluconate + H(+). It participates in carbohydrate degradation; pentose phosphate pathway; D-ribulose 5-phosphate from D-glucose 6-phosphate (oxidative stage): step 2/3. Catalyzes the hydrolysis of 6-phosphogluconolactone to 6-phosphogluconate. The polypeptide is 6-phosphogluconolactonase (Blochmanniella floridana).